Here is a 282-residue protein sequence, read N- to C-terminus: MDNCKILFIGDPHFKVNNIEIIDEFIHQCLEQLTSDIDICVIGGDILHTHERLHTTALNKAINFIDQVRKICPTYILVGNHDYENNQQFLSKRHWMNALKEWTNTFIIDYTSIIKIKNFTFGMVPYVPPGRFVEALNIIDNEWWKNVNCIFAHQEFYGCKMGAIESTEGDKWDHSFPLVISGHIHSEQRPQKNIFYPGSVIQHAFGESEDNGLLLLIFNDPEIGEYPLMVKKILDIPKMRTINVKISDFSTLVLDPKKNERIKIICKGSVESFKAFKKNKVV.

3 residues coordinate a divalent metal cation: D45, N80, and H203.

This sequence belongs to the metallophosphoesterase superfamily. IIV-6 244L family.

This chain is Putative phosphoesterase 244L, found in Invertebrate iridescent virus 6 (IIV-6).